The primary structure comprises 466 residues: Argininosuccinate lyase (466 aa).

This sequence belongs to the lyase 1 family. Argininosuccinate lyase subfamily.

It localises to the cytoplasm. It catalyses the reaction 2-(N(omega)-L-arginino)succinate = fumarate + L-arginine. The protein operates within amino-acid biosynthesis; L-arginine biosynthesis; L-arginine from L-ornithine and carbamoyl phosphate: step 3/3. This Roseobacter denitrificans (strain ATCC 33942 / OCh 114) (Erythrobacter sp. (strain OCh 114)) protein is Argininosuccinate lyase.